The sequence spans 476 residues: Eukaryotic translation initiation factor 3 subunit L (476 aa).

Residues Asp-257–Leu-452 form the PCI domain.

It belongs to the eIF-3 subunit L family. Component of the eukaryotic translation initiation factor 3 (eIF-3) complex.

It localises to the cytoplasm. Its function is as follows. Component of the eukaryotic translation initiation factor 3 (eIF-3) complex, which is involved in protein synthesis of a specialized repertoire of mRNAs and, together with other initiation factors, stimulates binding of mRNA and methionyl-tRNAi to the 40S ribosome. The eIF-3 complex specifically targets and initiates translation of a subset of mRNAs involved in cell proliferation. The protein is Eukaryotic translation initiation factor 3 subunit L of Aspergillus niger (strain ATCC MYA-4892 / CBS 513.88 / FGSC A1513).